We begin with the raw amino-acid sequence, 201 residues long: Syndecan-2 (201 aa).

A signal peptide spans 1–18 (MRRAWILLTLGLVACVSA). The Extracellular segment spans residues 19–144 (ESRAELTSDK…HSDSLFKRTE (126 aa)). O-linked (Xyl...) (glycosaminoglycan) serine glycosylation is found at S41, S55, and S57. Disordered stretches follow at residues 42 to 70 (GVYP…ELTT) and 90 to 130 (TLNI…DTNV). Residues 90–102 (TLNIQNKIPAQTK) show a composition bias toward polar residues. T101 carries O-linked (GalNAc...) threonine glycosylation. Basic and acidic residues predominate over residues 103-123 (SPEETDKEKVHLSDSERKMDP). Phosphoserine; by FAM20C is present on S115. The helical transmembrane segment at 145–169 (VLAAVIAGGVIGFLFAIFLILLLVY) threads the bilayer. Residues 170 to 201 (RMRKKDEGSYDLGERKPSSAAYQKAPTKEFYA) are Cytoplasmic-facing. A disordered region spans residues 178-201 (SYDLGERKPSSAAYQKAPTKEFYA). S187 is modified (phosphoserine).

This sequence belongs to the syndecan proteoglycan family. Interacts (via cytoplasmic domain) with SARM1. Forms a complex with SDCBP and PDCD6IP. O-glycosylated with core 1 or possibly core 8 glycans. Contains heparan sulfate. Also contains chondroitin sulfate.

It localises to the membrane. Functionally, cell surface proteoglycan which regulates dendritic arbor morphogenesis. This is Syndecan-2 (SDC2) from Homo sapiens (Human).